Reading from the N-terminus, the 95-residue chain is Co-chaperonin GroES (95 aa).

This sequence belongs to the GroES chaperonin family. In terms of assembly, heptamer of 7 subunits arranged in a ring. Interacts with the chaperonin GroEL.

The protein localises to the cytoplasm. Its function is as follows. Together with the chaperonin GroEL, plays an essential role in assisting protein folding. The GroEL-GroES system forms a nano-cage that allows encapsulation of the non-native substrate proteins and provides a physical environment optimized to promote and accelerate protein folding. GroES binds to the apical surface of the GroEL ring, thereby capping the opening of the GroEL channel. The sequence is that of Co-chaperonin GroES from Streptococcus uberis (strain ATCC BAA-854 / 0140J).